A 262-amino-acid polypeptide reads, in one-letter code: Glutamate racemase (262 aa).

Substrate-binding positions include D5–S6 and Y37–G38. C69 acts as the Proton donor/acceptor in catalysis. Position 70–71 (N70–T71) interacts with substrate. C181 functions as the Proton donor/acceptor in the catalytic mechanism. T182 to H183 provides a ligand contact to substrate.

This sequence belongs to the aspartate/glutamate racemases family.

It carries out the reaction L-glutamate = D-glutamate. Its pathway is cell wall biogenesis; peptidoglycan biosynthesis. Provides the (R)-glutamate required for cell wall biosynthesis. In Buchnera aphidicola subsp. Acyrthosiphon pisum (strain 5A), this protein is Glutamate racemase.